Here is an 89-residue protein sequence, read N- to C-terminus: Small ribosomal subunit protein uS15 (89 aa).

It belongs to the universal ribosomal protein uS15 family. Part of the 30S ribosomal subunit. Forms a bridge to the 50S subunit in the 70S ribosome, contacting the 23S rRNA.

Functionally, one of the primary rRNA binding proteins, it binds directly to 16S rRNA where it helps nucleate assembly of the platform of the 30S subunit by binding and bridging several RNA helices of the 16S rRNA. Its function is as follows. Forms an intersubunit bridge (bridge B4) with the 23S rRNA of the 50S subunit in the ribosome. The chain is Small ribosomal subunit protein uS15 from Oleidesulfovibrio alaskensis (strain ATCC BAA-1058 / DSM 17464 / G20) (Desulfovibrio alaskensis).